We begin with the raw amino-acid sequence, 308 residues long: Mitochondrial brown fat uncoupling protein 1 (308 aa).

The Mitochondrial intermembrane segment spans residues 1–10; sequence MVASAEADVP. The helical transmembrane segment at 11-33 threads the bilayer; sequence PPTMLVKIASAGLSACLADIITF. Solcar repeat units lie at residues 11–103, 112–202, and 211–296; these read PPTM…VQEY, ATLG…LKEA, and DDIP…LKKE. At 34–74 the chain is on the mitochondrial matrix side; it reads PLDTAKVRLQVQGERPNAPGVKYKGVLGTIATVAKTEGPLK. Position 57 (Lys57) interacts with fatty acid 16:0. A helical membrane pass occupies residues 75 to 97; sequence LYGGLPAGIQRQISFASLRIGLY. Over 98-117 the chain is Mitochondrial intermembrane; the sequence is DTVQEYFNAHRKTPATLGNK. A helical membrane pass occupies residues 118-134; sequence ISAGLMTGCVTVFIGQP. Residues 135-179 are Mitochondrial matrix-facing; the sequence is TEVAKVRMQAQSSLHWLKPRYSGTYNAYYVIVKTEGFLGLWKGTS. A helical membrane pass occupies residues 180–196; it reads LNLTRNVIINCTELVVY. The Mitochondrial intermembrane portion of the chain corresponds to 197–213; that stretch reads DVLKEALVKNNVLADDI. Residues 214–233 form a helical membrane-spanning segment; sequence PCHLLAALTAGFCTTALASP. Topologically, residues 234–267 are mitochondrial matrix; the sequence is VDVVKTRFINSPPGYYPHVHNCALNMLQKEGLRA. Cys255 carries the cysteine sulfenic acid (-SOH) modification. Residues 268 to 290 traverse the membrane as a helical segment; that stretch reads FFKGFVPSFLRLGSWTVIMHVTF. Residue Lys270 coordinates fatty acid 16:0. Residues 291–308 are Mitochondrial intermembrane-facing; the sequence is EQLKKELMKSRQTVDCAT.

Belongs to the mitochondrial carrier (TC 2.A.29) family. In terms of assembly, most probably functions as a monomer. Binds one purine nucleotide per monomer. However, has also been suggested to function as a homodimer or a homotetramer. Tightly associates with cardiolipin in the mitochondrion inner membrane; may stabilize and regulate its activity. May undergo sulfenylation upon cold exposure. May increase the sensitivity of UCP1 thermogenic function to the activation by noradrenaline probably through structural effects. In terms of processing, may undergo ubiquitin-mediated proteasomal degradation. Brown adipose tissue.

It is found in the mitochondrion inner membrane. It carries out the reaction H(+)(in) = H(+)(out). Its activity is regulated as follows. Has no constitutive proton transporter activity and has to be activated by long-chain fatty acids/LCFAs. Inhibited by purine nucleotides. Both purine nucleotides and LCFAs bind the cytosolic side of the transporter and directly compete to activate or inhibit it. Activated by noradrenaline and reactive oxygen species. Despite lacking canonical translational encoding for selenocysteine, a small pool of the protein has been observed to selectively incorporate selenocysteine at 'Cys-255'. Selenocysteine-modified protein is highly sensitive to redox modification and may constitute a pool of protein highly sensitive to activation by elevated levels of reactive oxygen species (ROS). In terms of biological role, mitochondrial protein responsible for thermogenic respiration, a specialized capacity of brown adipose tissue and beige fat that participates in non-shivering adaptive thermogenesis to temperature and diet variations and more generally to the regulation of energy balance. Functions as a long-chain fatty acid/LCFA and proton symporter, simultaneously transporting one LCFA and one proton through the inner mitochondrial membrane. However, LCFAs remaining associated with the transporter via their hydrophobic tails, it results in an apparent transport of protons activated by LCFAs. Thereby, dissipates the mitochondrial proton gradient and converts the energy of substrate oxydation into heat instead of ATP. Regulates the production of reactive oxygen species/ROS by mitochondria. In Suncus murinus (Asian house shrew), this protein is Mitochondrial brown fat uncoupling protein 1.